We begin with the raw amino-acid sequence, 120 residues long: Holo-[acyl-carrier-protein] synthase (120 aa).

Mg(2+)-binding residues include aspartate 8 and glutamate 60.

This sequence belongs to the P-Pant transferase superfamily. AcpS family. Requires Mg(2+) as cofactor.

The protein resides in the cytoplasm. The enzyme catalyses apo-[ACP] + CoA = holo-[ACP] + adenosine 3',5'-bisphosphate + H(+). Its function is as follows. Transfers the 4'-phosphopantetheine moiety from coenzyme A to a Ser of acyl-carrier-protein. The sequence is that of Holo-[acyl-carrier-protein] synthase from Anaplasma marginale (strain Florida).